The sequence spans 321 residues: Anthranilate phosphoribosyltransferase (321 aa).

Residues Gly-72, 75–76, Thr-80, 82–85, 99–107, and Ser-111 each bind 5-phospho-alpha-D-ribose 1-diphosphate; these read GD, NVST, and KHGNVSITS. Position 72 (Gly-72) interacts with anthranilate. Ser-84 provides a ligand contact to Mg(2+). Residue Asn-102 participates in anthranilate binding. Anthranilate is bound at residue Arg-157. Positions 216 and 217 each coordinate Mg(2+).

Belongs to the anthranilate phosphoribosyltransferase family. Homodimer. Mg(2+) serves as cofactor.

The catalysed reaction is N-(5-phospho-beta-D-ribosyl)anthranilate + diphosphate = 5-phospho-alpha-D-ribose 1-diphosphate + anthranilate. It participates in amino-acid biosynthesis; L-tryptophan biosynthesis; L-tryptophan from chorismate: step 2/5. Catalyzes the transfer of the phosphoribosyl group of 5-phosphorylribose-1-pyrophosphate (PRPP) to anthranilate to yield N-(5'-phosphoribosyl)-anthranilate (PRA). The chain is Anthranilate phosphoribosyltransferase from Methanococcus maripaludis (strain DSM 14266 / JCM 13030 / NBRC 101832 / S2 / LL).